A 404-amino-acid polypeptide reads, in one-letter code: 5-aminolevulinate synthase (404 aa).

Residues Arg-21 and Ser-136 each coordinate substrate. Pyridoxal 5'-phosphate is bound by residues Ser-188, His-216, and Thr-244. The active site involves Lys-247. Position 247 is an N6-(pyridoxal phosphate)lysine (Lys-247). The pyridoxal 5'-phosphate site is built by Thr-276 and Thr-277. Position 362 (Thr-362) interacts with substrate.

Belongs to the class-II pyridoxal-phosphate-dependent aminotransferase family. As to quaternary structure, homodimer. It depends on pyridoxal 5'-phosphate as a cofactor.

It carries out the reaction succinyl-CoA + glycine + H(+) = 5-aminolevulinate + CO2 + CoA. It participates in porphyrin-containing compound metabolism; protoporphyrin-IX biosynthesis; 5-aminolevulinate from glycine: step 1/1. In Rhizobium meliloti (strain 1021) (Ensifer meliloti), this protein is 5-aminolevulinate synthase (hemA).